Reading from the N-terminus, the 351-residue chain is uncharacterized protein (351 aa).

This is an uncharacterized protein from Caenorhabditis elegans.